Reading from the N-terminus, the 78-residue chain is Putative membrane protein insertion efficiency factor (78 aa).

It belongs to the UPF0161 family.

The protein localises to the cell membrane. Its function is as follows. Could be involved in insertion of integral membrane proteins into the membrane. This Bacillus mycoides (strain KBAB4) (Bacillus weihenstephanensis) protein is Putative membrane protein insertion efficiency factor.